A 499-amino-acid chain; its full sequence is Bestrophin homolog 22 (499 aa).

4 consecutive transmembrane segments (helical) span residues 29 to 49 (WKAV…ISCI), 77 to 97 (IPLT…WGSI), 235 to 255 (LVYP…CLIG), and 267 to 287 (GIDL…MGWM). Basic and acidic residues predominate over residues 417 to 432 (HNAKHAKQRGLERANS). Disordered stretches follow at residues 417–455 (HNAK…ANGS) and 474–499 (TSNP…TSRH).

This sequence belongs to the anion channel-forming bestrophin (TC 1.A.46) family. Calcium-sensitive chloride channel subfamily. Forms oligomers.

The protein resides in the cell membrane. In terms of biological role, forms chloride channels. This chain is Bestrophin homolog 22 (best-22), found in Caenorhabditis elegans.